A 316-amino-acid polypeptide reads, in one-letter code: Phospho-N-acetylmuramoyl-pentapeptide-transferase (316 aa).

10 helical membrane passes run 5–25 (IIFA…FFIP), 52–72 (TMGG…FSPW), 76–96 (LFIL…DDFL), 116–136 (FLLA…EIIV), 145–165 (LANF…NSVN), 172–192 (GLAA…ALFL), 195–212 (VTYG…LGFL), 221–241 (VFMG…VALL), 244–264 (LPLI…SVIL), and 296–316 (VVYS…YSLS).

Belongs to the glycosyltransferase 4 family. MraY subfamily. Requires Mg(2+) as cofactor.

Its subcellular location is the cell membrane. It catalyses the reaction UDP-N-acetyl-alpha-D-muramoyl-L-alanyl-gamma-D-glutamyl-meso-2,6-diaminopimeloyl-D-alanyl-D-alanine + di-trans,octa-cis-undecaprenyl phosphate = di-trans,octa-cis-undecaprenyl diphospho-N-acetyl-alpha-D-muramoyl-L-alanyl-D-glutamyl-meso-2,6-diaminopimeloyl-D-alanyl-D-alanine + UMP. It participates in cell wall biogenesis; peptidoglycan biosynthesis. Catalyzes the initial step of the lipid cycle reactions in the biosynthesis of the cell wall peptidoglycan: transfers peptidoglycan precursor phospho-MurNAc-pentapeptide from UDP-MurNAc-pentapeptide onto the lipid carrier undecaprenyl phosphate, yielding undecaprenyl-pyrophosphoryl-MurNAc-pentapeptide, known as lipid I. The polypeptide is Phospho-N-acetylmuramoyl-pentapeptide-transferase (Caldanaerobacter subterraneus subsp. tengcongensis (strain DSM 15242 / JCM 11007 / NBRC 100824 / MB4) (Thermoanaerobacter tengcongensis)).